Here is a 364-residue protein sequence, read N- to C-terminus: sn-glycerol-3-phosphate import ATP-binding protein UgpC (364 aa).

One can recognise an ABC transporter domain in the interval 4 to 235 (VVLRNVRKTY…PATTFVASFI (232 aa)). 37 to 44 (GPSGCGKS) lines the ATP pocket.

This sequence belongs to the ABC transporter superfamily. sn-glycerol-3-phosphate importer (TC 3.A.1.1.3) family. As to quaternary structure, the complex is composed of two ATP-binding proteins (UgpC), two transmembrane proteins (UgpA and UgpE) and a solute-binding protein (UgpB).

The protein resides in the cell inner membrane. The catalysed reaction is sn-glycerol 3-phosphate(out) + ATP + H2O = sn-glycerol 3-phosphate(in) + ADP + phosphate + H(+). Its function is as follows. Part of the ABC transporter complex UgpBAEC involved in sn-glycerol-3-phosphate (G3P) import. Responsible for energy coupling to the transport system. The protein is sn-glycerol-3-phosphate import ATP-binding protein UgpC of Rhodopseudomonas palustris (strain BisB5).